Consider the following 742-residue polypeptide: 5-methyltetrahydropteroyltriglutamate--homocysteine methyltransferase (742 aa).

5-methyltetrahydropteroyltri-L-glutamate contacts are provided by residues 18-21 and K112; that span reads REWK. Residues 420 to 422 and E473 contribute to the L-homocysteine site; that span reads IGS. L-methionine is bound by residues 420–422 and E473; that span reads IGS. W550 is a 5-methyltetrahydropteroyltri-L-glutamate binding site. D588 serves as a coordination point for L-homocysteine. D588 contacts L-methionine. E594 provides a ligand contact to 5-methyltetrahydropteroyltri-L-glutamate. Zn(2+)-binding residues include H630, C632, and E654. The Proton donor role is filled by H683. C715 is a binding site for Zn(2+).

The protein belongs to the vitamin-B12 independent methionine synthase family. It depends on Zn(2+) as a cofactor.

It carries out the reaction 5-methyltetrahydropteroyltri-L-glutamate + L-homocysteine = tetrahydropteroyltri-L-glutamate + L-methionine. Its pathway is amino-acid biosynthesis; L-methionine biosynthesis via de novo pathway; L-methionine from L-homocysteine (MetE route): step 1/1. Functionally, catalyzes the transfer of a methyl group from 5-methyltetrahydrofolate to homocysteine resulting in methionine formation. This is 5-methyltetrahydropteroyltriglutamate--homocysteine methyltransferase from Staphylococcus aureus (strain bovine RF122 / ET3-1).